Reading from the N-terminus, the 382-residue chain is Mannitol-1-phosphate 5-dehydrogenase (382 aa).

Residue 3–14 (ALHFGAGNIGRG) coordinates NAD(+).

It belongs to the mannitol dehydrogenase family.

It catalyses the reaction D-mannitol 1-phosphate + NAD(+) = beta-D-fructose 6-phosphate + NADH + H(+). The sequence is that of Mannitol-1-phosphate 5-dehydrogenase (mtlD) from Klebsiella pneumoniae.